The following is a 566-amino-acid chain: Mucolipin-2 (566 aa).

At 1 to 65 (MARQPYRFPQ…YRARRQIPWK (65 aa)) the chain is on the cytoplasmic side. A helical membrane pass occupies residues 66–86 (LGLQILKIVMVTTQLVRFGLS). Topologically, residues 87 to 288 (NQLVVAFKED…IFGSTQKNAQ (202 aa)) are extracellular. Positions 107–123 (KGYSGTDEDDYSCSVYT) are extracellular/lumenal pore loop. 2 disulfide bridges follow: C164/C190 and C243/C274. Residues 289–309 (YVLVFDAFVIVICLASLILCT) traverse the membrane as a helical segment. Topologically, residues 310-346 (RSIVLALRLRKRFLNFFLEKYKRPVCDTDQWEFINGW) are cytoplasmic. Residues 347 to 367 (YVLVIISDLMTIIGSILKMEI) traverse the membrane as a helical segment. Over 368–376 (KAKNLTNYD) the chain is Extracellular. Residues 377-397 (LCSIFLGTSTLLVWVGVIRYL) traverse the membrane as a helical segment. Residues 398–419 (GYFQAYNVLILTMQASLPKVLR) are Cytoplasmic-facing. Residues 420 to 440 (FCACAGMIYLGYTFCGWIVLG) form a helical membrane-spanning segment. The Extracellular segment spans residues 441 to 448 (PYHDKFEN). An intramembrane region (pore-forming) is located at residues 449 to 469 (LNTVAECLFSLVNGDDMFATF). The short motif at 461 to 464 (NGDD) is the Selectivity filter element. Topologically, residues 470–480 (AQIQQKSILVW) are extracellular. Residues 481 to 502 (LFSRLYLYSFISLFIYMILSLF) traverse the membrane as a helical segment. Residues 503–566 (IALITDSYDT…RSDDHLIPIS (64 aa)) are Cytoplasmic-facing.

The protein belongs to the transient receptor (TC 1.A.4) family. Polycystin subfamily. MCOLN2 sub-subfamily. As to quaternary structure, forms homooligomeric complexes; probably tetrameric. Can heterooligomerize with MCOLN1; heteromeric assemblies have different channel properties as compared to the respective homooligomers and may be tissue-specific. Interacts with TMEM176A.

Its subcellular location is the cell membrane. It is found in the late endosome membrane. It localises to the lysosome membrane. The protein localises to the recycling endosome membrane. It carries out the reaction Ca(2+)(in) = Ca(2+)(out). The enzyme catalyses Fe(2+)(in) = Fe(2+)(out). Its activity is regulated as follows. Channel activity is reduced by low extracellular/lumenal pH level. Nonselective cation channel probably playing a role in the regulation of membrane trafficking events. Acts as a Ca(2+)-permeable cation channel with inwardly rectifying activity. May activate ARF6 and be involved in the trafficking of GPI-anchored cargo proteins to the cell surface via the ARF6-regulated recycling pathway. May play a role in immune processes. In adaptive immunity, TRPML2 and TRPML1 may play redundant roles in the function of the specialized lysosomes of B cells. In the innate immune response, may play a role in the regulation of chemokine secretion and macrophage migration. Through a possible and probably tissue-specific heteromerization with MCOLN1 may be at least in part involved in many lysosome-dependent cellular events. Also functions as a Fe(2+) permeable channel. This is Mucolipin-2 from Homo sapiens (Human).